Reading from the N-terminus, the 148-residue chain is Large ribosomal subunit protein bL9 (148 aa).

This sequence belongs to the bacterial ribosomal protein bL9 family.

Its function is as follows. Binds to the 23S rRNA. The polypeptide is Large ribosomal subunit protein bL9 (Campylobacter concisus (strain 13826)).